Reading from the N-terminus, the 247-residue chain is UDP-2,3-diacylglucosamine hydrolase (247 aa).

5 residues coordinate Mn(2+): D8, H10, D41, N79, and H114. 79-80 (NR) is a substrate binding site. Substrate is bound by residues D122, S160, D171, Q174, and H202. Residues H202 and H204 each contribute to the Mn(2+) site.

Belongs to the LpxH family. Requires Mn(2+) as cofactor.

It is found in the cell inner membrane. The catalysed reaction is UDP-2-N,3-O-bis[(3R)-3-hydroxytetradecanoyl]-alpha-D-glucosamine + H2O = 2-N,3-O-bis[(3R)-3-hydroxytetradecanoyl]-alpha-D-glucosaminyl 1-phosphate + UMP + 2 H(+). It functions in the pathway glycolipid biosynthesis; lipid IV(A) biosynthesis; lipid IV(A) from (3R)-3-hydroxytetradecanoyl-[acyl-carrier-protein] and UDP-N-acetyl-alpha-D-glucosamine: step 4/6. Functionally, hydrolyzes the pyrophosphate bond of UDP-2,3-diacylglucosamine to yield 2,3-diacylglucosamine 1-phosphate (lipid X) and UMP by catalyzing the attack of water at the alpha-P atom. Involved in the biosynthesis of lipid A, a phosphorylated glycolipid that anchors the lipopolysaccharide to the outer membrane of the cell. The sequence is that of UDP-2,3-diacylglucosamine hydrolase from Xanthomonas campestris pv. campestris (strain B100).